Reading from the N-terminus, the 422-residue chain is Probable cysteine desulfurase (422 aa).

At lysine 235 the chain carries N6-(pyridoxal phosphate)lysine.

It belongs to the class-V pyridoxal-phosphate-dependent aminotransferase family. Csd subfamily. The cofactor is pyridoxal 5'-phosphate.

It carries out the reaction (sulfur carrier)-H + L-cysteine = (sulfur carrier)-SH + L-alanine. Functionally, catalyzes the removal of elemental sulfur and selenium atoms from L-cysteine, L-cystine, L-selenocysteine, and L-selenocystine to produce L-alanine. This chain is Probable cysteine desulfurase (csd), found in Borreliella burgdorferi (strain ATCC 35210 / DSM 4680 / CIP 102532 / B31) (Borrelia burgdorferi).